The primary structure comprises 84 residues: Putative defensin-like protein 101 (84 aa).

A signal peptide spans 1-27; it reads MDITKNIVTLLLVVLFPILFYYNNVLA. 4 cysteine pairs are disulfide-bonded: cysteine 39/cysteine 81, cysteine 43/cysteine 67, cysteine 52/cysteine 79, and cysteine 56/cysteine 80.

The protein belongs to the DEFL family.

It localises to the secreted. In Arabidopsis thaliana (Mouse-ear cress), this protein is Putative defensin-like protein 101.